The chain runs to 534 residues: uncharacterized protein (534 aa).

Disordered stretches follow at residues 1–93, 123–260, 313–349, and 383–505; these read MSSS…DDTG, SPES…LSSA, AAAT…TFPS, and PWGA…QGCP. A compositionally biased stretch (pro residues) spans 35–45; that stretch reads GPGPDPGPEPG. Residues serine 87 and serine 123 each carry the phosphoserine modification. The span at 145–161 shows a compositional bias: low complexity; that stretch reads RGAAAQRCGEAARAEAG. Over residues 230 to 239 the composition is skewed to basic and acidic residues; sequence SPKDPRDTPR.

This is an uncharacterized protein from Bos taurus (Bovine).